Reading from the N-terminus, the 248-residue chain is Triosephosphate isomerase (248 aa).

A substrate-binding site is contributed by 9–11 (NWK). The active-site Electrophile is the H94. E166 (proton acceptor) is an active-site residue. Substrate contacts are provided by residues G172, S212, and 233-234 (GG).

This sequence belongs to the triosephosphate isomerase family. Homodimer.

Its subcellular location is the cytoplasm. It catalyses the reaction D-glyceraldehyde 3-phosphate = dihydroxyacetone phosphate. It functions in the pathway carbohydrate biosynthesis; gluconeogenesis. Its pathway is carbohydrate degradation; glycolysis; D-glyceraldehyde 3-phosphate from glycerone phosphate: step 1/1. Involved in the gluconeogenesis. Catalyzes stereospecifically the conversion of dihydroxyacetone phosphate (DHAP) to D-glyceraldehyde-3-phosphate (G3P). In Thermoanaerobacter pseudethanolicus (strain ATCC 33223 / 39E) (Clostridium thermohydrosulfuricum), this protein is Triosephosphate isomerase.